A 743-amino-acid chain; its full sequence is 1,4-alpha-glucan branching enzyme GlgB (743 aa).

Asp416 serves as the catalytic Nucleophile. The active-site Proton donor is the Glu469.

This sequence belongs to the glycosyl hydrolase 13 family. GlgB subfamily. In terms of assembly, monomer.

The catalysed reaction is Transfers a segment of a (1-&gt;4)-alpha-D-glucan chain to a primary hydroxy group in a similar glucan chain.. It participates in glycan biosynthesis; glycogen biosynthesis. Catalyzes the formation of the alpha-1,6-glucosidic linkages in glycogen by scission of a 1,4-alpha-linked oligosaccharide from growing alpha-1,4-glucan chains and the subsequent attachment of the oligosaccharide to the alpha-1,6 position. The polypeptide is 1,4-alpha-glucan branching enzyme GlgB (Shewanella baltica (strain OS185)).